Here is a 732-residue protein sequence, read N- to C-terminus: Polyribonucleotide nucleotidyltransferase (732 aa).

Mg(2+) contacts are provided by Asp-503 and Asp-509. The KH domain maps to 570 to 629; the sequence is PRLTAIQVPVESIGLIIGKGGETIRSITEETGAEINIEDDGTVTIACSSNEGTKGAVEII. The region spanning 639–713 is the S1 motif domain; sequence GTVYIGKVRD…GKTRFALSIK (75 aa).

This sequence belongs to the polyribonucleotide nucleotidyltransferase family. The cofactor is Mg(2+).

It localises to the cytoplasm. It catalyses the reaction RNA(n+1) + phosphate = RNA(n) + a ribonucleoside 5'-diphosphate. Its function is as follows. Involved in mRNA degradation. Catalyzes the phosphorolysis of single-stranded polyribonucleotides processively in the 3'- to 5'-direction. In Chlorobium phaeovibrioides (strain DSM 265 / 1930) (Prosthecochloris vibrioformis (strain DSM 265)), this protein is Polyribonucleotide nucleotidyltransferase.